The chain runs to 277 residues: E3 ubiquitin-protein ligase CCNB1IP1 (277 aa).

The RING-type; atypical zinc finger occupies 4-51 (CEDMLLCNYRKCRIKLSGYAWVTACSHIFCDQHGSGEFSRSPAICPAC). A coiled-coil region spans residues 127 to 182 (QQIQSKDVELTSMKGEVTSMKKVLEEYKKKFSDISEKLMERNRQYQKLQGLYDSLR).

Interacts with CCNB1, UBE2L3 and NF2. Post-translationally, ubiquitinated; autoubiquitinated. In terms of processing, phosphorylated by CDK1 on serine or threonine residues (in vitro). Highly expressed in heart. Detected at intermediate levels in liver and kidney, and at low levels in placenta, brain and lung.

Its subcellular location is the nucleus. The protein localises to the chromosome. The catalysed reaction is S-ubiquitinyl-[E2 ubiquitin-conjugating enzyme]-L-cysteine + [acceptor protein]-L-lysine = [E2 ubiquitin-conjugating enzyme]-L-cysteine + N(6)-ubiquitinyl-[acceptor protein]-L-lysine.. The protein operates within protein modification; protein ubiquitination. Functionally, ubiquitin E3 ligase that acts as a limiting factor for crossing-over during meiosis: required during zygonema to limit the colocalization of RNF212 with MutS-gamma-associated recombination sites and thereby establish early differentiation of crossover and non-crossover sites. Later, it is directed by MutL-gamma to stably accumulate at designated crossover sites. Probably promotes the dissociation of RNF212 and MutS-gamma to allow the progression of recombination and the implementation of the final steps of crossing over. Modulates cyclin-B levels and participates in the regulation of cell cycle progression through the G2 phase. Overexpression causes delayed entry into mitosis. The polypeptide is E3 ubiquitin-protein ligase CCNB1IP1 (CCNB1IP1) (Homo sapiens (Human)).